Here is a 486-residue protein sequence, read N- to C-terminus: N-succinylglutamate 5-semialdehyde dehydrogenase (486 aa).

220–225 (GSSRTG) contacts NAD(+). Residues glutamate 243 and cysteine 277 contribute to the active site.

It belongs to the aldehyde dehydrogenase family. AstD subfamily.

The enzyme catalyses N-succinyl-L-glutamate 5-semialdehyde + NAD(+) + H2O = N-succinyl-L-glutamate + NADH + 2 H(+). The protein operates within amino-acid degradation; L-arginine degradation via AST pathway; L-glutamate and succinate from L-arginine: step 4/5. Its function is as follows. Catalyzes the NAD-dependent reduction of succinylglutamate semialdehyde into succinylglutamate. This Shewanella baltica (strain OS223) protein is N-succinylglutamate 5-semialdehyde dehydrogenase.